The chain runs to 228 residues: Large ribosomal subunit protein mL64 (228 aa).

Disordered stretches follow at residues 20–44 (PRSR…DREN) and 186–228 (QRKR…KPSS). Residues 98 to 207 (TMQESLRVQQ…KKEARIAAMA (110 aa)) are a coiled coil. Residues 184–200 (KQQRKRLKEERQRQKKE) carry the Nuclear localization signal motif. Residues 186 to 202 (QRKRLKEERQRQKKEAR) show a composition bias toward basic and acidic residues. Residues 212 to 228 (QDSAEAQDSAASGKPSS) show a composition bias toward low complexity.

The protein belongs to the mitochondrion-specific ribosomal protein mL64 family. As to quaternary structure, component of the mitochondrial ribosome large subunit (39S) which comprises a 16S rRNA and about 50 distinct proteins. Interacts with GADD45A, GADD45B and GADD45G. Interacts with NR4A1 via the NR4A1 AB domain. Interacts with ATAD3A and ATAD3B.

The protein resides in the mitochondrion. Its subcellular location is the nucleus. Functionally, acts as a negative regulator of G1 to S cell cycle phase progression by inhibiting cyclin-dependent kinases. Inhibitory effects are additive with GADD45 proteins but also occur in the absence of GADD45 proteins. Acts as a repressor of the orphan nuclear receptor NR4A1 by inhibiting AB domain-mediated transcriptional activity. May be involved in the hormone-mediated regulation of NR4A1 transcriptional activity. May play a role in mitochondrial protein synthesis. This is Large ribosomal subunit protein mL64 (Gadd45gip1) from Rattus norvegicus (Rat).